Consider the following 466-residue polypeptide: Delta-1 crystallin (466 aa).

The protein belongs to the lyase 1 family. Argininosuccinate lyase subfamily. As to quaternary structure, homotetramer. Eye lens.

Delta crystallin, the principal crystallin in embryonic lens, is found only in birds and reptiles. Despite possessing the necessary catalytic residues, this protein does not function as an enzymatically active argininosuccinate lyase. This is Delta-1 crystallin (ASL1) from Anas platyrhynchos (Mallard).